The chain runs to 87 residues: Small ribosomal subunit protein uS15 (87 aa).

It belongs to the universal ribosomal protein uS15 family. In terms of assembly, part of the 30S ribosomal subunit. Forms a bridge to the 50S subunit in the 70S ribosome, contacting the 23S rRNA.

Functionally, one of the primary rRNA binding proteins, it binds directly to 16S rRNA where it helps nucleate assembly of the platform of the 30S subunit by binding and bridging several RNA helices of the 16S rRNA. Forms an intersubunit bridge (bridge B4) with the 23S rRNA of the 50S subunit in the ribosome. The sequence is that of Small ribosomal subunit protein uS15 from Acetivibrio thermocellus (strain ATCC 27405 / DSM 1237 / JCM 9322 / NBRC 103400 / NCIMB 10682 / NRRL B-4536 / VPI 7372) (Clostridium thermocellum).